The following is a 1252-amino-acid chain: LRR receptor-like serine/threonine-protein kinase GSO2 (1252 aa).

The signal sequence occupies residues 1-22 (MQQNSVLLALFFLCFSSGLGSG). Residues 23-876 (QPGQRDDLQT…QRSLSPKTVV (854 aa)) lie on the Extracellular side of the membrane. N-linked (GlcNAc...) asparagine glycosylation is found at Asn-62, Asn-77, and Asn-117. 10 LRR repeats span residues 94–118 (FNNL…LSNL), 120–143 (SSLE…LGSL), 144–166 (VNLK…TFGN), 168–190 (VNLQ…RFGR), 191–215 (LVQL…IGNC), 217–239 (SLAL…LNRL), 240–263 (KNLQ…LGDL), 265–286 (SIQY…RLTE), 287–310 (LANL…EFWR), and 312–335 (NQLE…ICSN). A glycan (N-linked (GlcNAc...) asparagine) is linked at Asn-157. 2 N-linked (GlcNAc...) asparagine glycosylation sites follow: Asn-214 and Asn-229. An N-linked (GlcNAc...) asparagine glycan is attached at Asn-299. N-linked (GlcNAc...) asparagine glycosylation is present at Asn-336. LRR repeat units lie at residues 337-360 (TSLK…ISNC), 361-384 (QSLK…LFQL), 386-408 (ELTN…ISNL), 409-433 (TNLQ…GFLG), 435-456 (LEIM…IGNC), 457-480 (TRLQ…IGRL), 481-504 (KDLT…LGNC), 506-528 (QMTV…FGFL), 529-552 (TALE…LINL), 554-575 (NLTR…LCGS), 577-599 (SYLS…LGKS), 600-622 (TNLD…TFGK), 623-648 (ISEL…GLCK), 650-670 (LTHI…WLGK), 671-695 (LPLL…IFSL), 697-719 (NILT…IGNL), 720-743 (QALN…IGKL), 745-767 (KLFE…IGQL), 768-792 (QDLQ…ISTL), 793-816 (PKLE…IGDM), and 818-839 (SLGY…QFSR). N-linked (GlcNAc...) asparagine glycosylation is found at Asn-370, Asn-394, and Asn-407. Asn-455 carries N-linked (GlcNAc...) asparagine glycosylation. N-linked (GlcNAc...) asparagine glycans are attached at residues Asn-538, Asn-554, Asn-559, and Asn-566. Asn-709 carries N-linked (GlcNAc...) asparagine glycosylation. Residue Asn-780 is glycosylated (N-linked (GlcNAc...) asparagine). N-linked (GlcNAc...) asparagine glycosylation is present at Asn-823. Residues 877–897 (IISAISSLAAIALMVLVIILF) traverse the membrane as a helical segment. At 898–1252 (FKQNHDLFKK…YREMQTDTDK (355 aa)) the chain is on the cytoplasmic side. Thr-945 carries the phosphothreonine modification. The region spanning 948-1232 (LNEEFMIGSG…PSSRQASEYL (285 aa)) is the Protein kinase domain. Residues 954-962 (IGSGGSGKV) and Lys-976 contribute to the ATP site. Residues Tyr-1024 and Tyr-1066 each carry the phosphotyrosine modification. Asp-1079 functions as the Proton acceptor in the catalytic mechanism. Ser-1114 is modified (phosphoserine). Residues Tyr-1124 and Tyr-1131 each carry the phosphotyrosine modification.

It belongs to the protein kinase superfamily. Ser/Thr protein kinase family. As to quaternary structure, interacts with CIF1 and CIF2. Mostly expressed in siliques, seeds, developing embryos and seedlings, detected in flower buds, but not in roots, leaves or stems.

It is found in the cell membrane. It carries out the reaction L-seryl-[protein] + ATP = O-phospho-L-seryl-[protein] + ADP + H(+). The enzyme catalyses L-threonyl-[protein] + ATP = O-phospho-L-threonyl-[protein] + ADP + H(+). In terms of biological role, together with GSO1, receptor-like serine/threonine-kinase required during the development of the epidermal surface in embryos and cotyledons. Involved in the nuclear division phase of megagametogenesis. In coordination with GSO2, regulates root growth through control of cell division and cell fate specification. Controls seedling root growth by modulating sucrose response after germination. Receptor of the peptide hormones CIF1 and CIF2 required for contiguous Casparian strip diffusion barrier formation in roots. The protein is LRR receptor-like serine/threonine-protein kinase GSO2 of Arabidopsis thaliana (Mouse-ear cress).